The following is a 131-amino-acid chain: Ribosome-binding factor A (131 aa).

The tract at residues glutamine 110–glutamate 131 is disordered. Acidic residues predominate over residues glutamate 115–glutamate 131.

The protein belongs to the RbfA family. In terms of assembly, monomer. Binds 30S ribosomal subunits, but not 50S ribosomal subunits or 70S ribosomes.

The protein localises to the cytoplasm. Its function is as follows. One of several proteins that assist in the late maturation steps of the functional core of the 30S ribosomal subunit. Associates with free 30S ribosomal subunits (but not with 30S subunits that are part of 70S ribosomes or polysomes). Required for efficient processing of 16S rRNA. May interact with the 5'-terminal helix region of 16S rRNA. The sequence is that of Ribosome-binding factor A from Natranaerobius thermophilus (strain ATCC BAA-1301 / DSM 18059 / JW/NM-WN-LF).